The primary structure comprises 164 residues: Phosphopantetheine adenylyltransferase (164 aa).

Position 9 (serine 9) interacts with substrate. Residues 9–10 (SF) and histidine 17 contribute to the ATP site. Positions 41, 78, and 92 each coordinate substrate. ATP is bound by residues 93-95 (GLR), glutamate 103, and 128-134 (GRVITST).

The protein belongs to the bacterial CoaD family. Homohexamer. The cofactor is Mg(2+).

It is found in the cytoplasm. It carries out the reaction (R)-4'-phosphopantetheine + ATP + H(+) = 3'-dephospho-CoA + diphosphate. Its pathway is cofactor biosynthesis; coenzyme A biosynthesis; CoA from (R)-pantothenate: step 4/5. Its function is as follows. Reversibly transfers an adenylyl group from ATP to 4'-phosphopantetheine, yielding dephospho-CoA (dPCoA) and pyrophosphate. This chain is Phosphopantetheine adenylyltransferase, found in Bartonella bacilliformis (strain ATCC 35685 / KC583 / Herrer 020/F12,63).